Consider the following 153-residue polypeptide: Transcriptional repressor NrdR (153 aa).

The segment at 3 to 34 (CPFCGKENTRVIDSRPADDCSSIRRRRQCDEC) is a zinc-finger region. The region spanning 49 to 139 (LVVIKKDNNR…VYREFKDVNT (91 aa)) is the ATP-cone domain.

The protein belongs to the NrdR family. It depends on Zn(2+) as a cofactor.

Functionally, negatively regulates transcription of bacterial ribonucleotide reductase nrd genes and operons by binding to NrdR-boxes. The sequence is that of Transcriptional repressor NrdR from Lachnoclostridium phytofermentans (strain ATCC 700394 / DSM 18823 / ISDg) (Clostridium phytofermentans).